The sequence spans 146 residues: Hemoglobin subunit beta-1 (146 aa).

In terms of domain architecture, Globin spans 2–146 (EWTDQERATI…VVSALGKQYH (145 aa)). 2 residues coordinate heme b: H63 and H92.

This sequence belongs to the globin family. Hb1 is a heterotetramer of two alpha-1 chains and two beta-1 chains. Hb2 is a heterotetramer of two alpha-2 chains and two beta-1 chains. HbC is a heterotetramer of two alpha-1 chains and two beta-2 chains. Red blood cells.

In terms of biological role, involved in oxygen transport from gills to the various peripheral tissues. This is Hemoglobin subunit beta-1 from Eleginops maclovinus (Patagonian blennie).